The primary structure comprises 574 residues: Ankyrin repeat protein B18 (574 aa).

6 ANK repeats span residues 56-87, 135-164, 167-213, 217-249, 253-285, and 327-356; these read TGYT…DVTM, IKSR…DPNF, DGYT…NLNA, CGNT…NFKI, HGLT…NVGE, and EGKT…DINA. One can recognise an F-box domain in the interval 541–574; the sequence is NCLLTLLPSEIIYEILYMLTINDLYNISYPPTKV.

This chain is Ankyrin repeat protein B18, found in Vaccinia virus (strain Ankara) (VACV).